Here is a 154-residue protein sequence, read N- to C-terminus: Myoglobin (154 aa).

The Globin domain occupies 2–148 (GLSEGEWQLV…FRKDIATKYK (147 aa)). Phosphoserine is present on serine 4. Histidine 65 is a binding site for nitrite. Residue histidine 65 participates in O2 binding. Threonine 68 bears the Phosphothreonine mark. Position 94 (histidine 94) interacts with heme b.

Belongs to the globin family. In terms of assembly, monomeric.

The protein localises to the cytoplasm. It is found in the sarcoplasm. It catalyses the reaction Fe(III)-heme b-[protein] + nitric oxide + H2O = Fe(II)-heme b-[protein] + nitrite + 2 H(+). The catalysed reaction is H2O2 + AH2 = A + 2 H2O. Its function is as follows. Monomeric heme protein which primary function is to store oxygen and facilitate its diffusion within muscle tissues. Reversibly binds oxygen through a pentacoordinated heme iron and enables its timely and efficient release as needed during periods of heightened demand. Depending on the oxidative conditions of tissues and cells, and in addition to its ability to bind oxygen, it also has a nitrite reductase activity whereby it regulates the production of bioactive nitric oxide. Under stress conditions, like hypoxia and anoxia, it also protects cells against reactive oxygen species thanks to its pseudoperoxidase activity. In Phocoenoides dalli dalli (Dall's porpoise), this protein is Myoglobin (MB).